A 429-amino-acid polypeptide reads, in one-letter code: Glutamyl-tRNA reductase (429 aa).

Residues 49 to 52, serine 108, 113 to 115, and glutamine 119 contribute to the substrate site; these read TCNR and EAQ. The active-site Nucleophile is cysteine 50. 188 to 193 contacts NADP(+); it reads GAGEMS.

This sequence belongs to the glutamyl-tRNA reductase family. Homodimer.

It catalyses the reaction (S)-4-amino-5-oxopentanoate + tRNA(Glu) + NADP(+) = L-glutamyl-tRNA(Glu) + NADPH + H(+). It participates in porphyrin-containing compound metabolism; protoporphyrin-IX biosynthesis; 5-aminolevulinate from L-glutamyl-tRNA(Glu): step 1/2. Catalyzes the NADPH-dependent reduction of glutamyl-tRNA(Glu) to glutamate 1-semialdehyde (GSA). This is Glutamyl-tRNA reductase from Rubrobacter xylanophilus (strain DSM 9941 / JCM 11954 / NBRC 16129 / PRD-1).